Here is a 273-residue protein sequence, read N- to C-terminus: 2,3,4,5-tetrahydropyridine-2,6-dicarboxylate N-succinyltransferase (273 aa).

The substrate site is built by R104 and D141.

The protein belongs to the transferase hexapeptide repeat family. Homotrimer.

It is found in the cytoplasm. It catalyses the reaction (S)-2,3,4,5-tetrahydrodipicolinate + succinyl-CoA + H2O = (S)-2-succinylamino-6-oxoheptanedioate + CoA. The protein operates within amino-acid biosynthesis; L-lysine biosynthesis via DAP pathway; LL-2,6-diaminopimelate from (S)-tetrahydrodipicolinate (succinylase route): step 1/3. The protein is 2,3,4,5-tetrahydropyridine-2,6-dicarboxylate N-succinyltransferase of Chromobacterium violaceum (strain ATCC 12472 / DSM 30191 / JCM 1249 / CCUG 213 / NBRC 12614 / NCIMB 9131 / NCTC 9757 / MK).